The sequence spans 122 residues: Prefoldin subunit 1 (122 aa).

Ala2 is modified (N-acetylalanine).

The protein belongs to the prefoldin subunit beta family. As to quaternary structure, heterohexamer of two PFD-alpha type and four PFD-beta type subunits.

Binds specifically to cytosolic chaperonin (c-CPN) and transfers target proteins to it. Binds to nascent polypeptide chain and promotes folding in an environment in which there are many competing pathways for nonnative proteins. The protein is Prefoldin subunit 1 (PFDN1) of Homo sapiens (Human).